The primary structure comprises 125 residues: Small ribosomal subunit protein bS6 (125 aa).

This sequence belongs to the bacterial ribosomal protein bS6 family.

Its function is as follows. Binds together with bS18 to 16S ribosomal RNA. This Baumannia cicadellinicola subsp. Homalodisca coagulata protein is Small ribosomal subunit protein bS6.